The chain runs to 86 residues: RNA-binding protein Hfq (86 aa).

Positions 10-71 constitute a Sm domain; the sequence is DLFLNNARKE…VSTIQPGKYI (62 aa).

It belongs to the Hfq family. In terms of assembly, homohexamer.

RNA chaperone that binds small regulatory RNA (sRNAs) and mRNAs to facilitate mRNA translational regulation in response to envelope stress, environmental stress and changes in metabolite concentrations. Also binds with high specificity to tRNAs. In Clostridioides difficile (strain 630) (Peptoclostridium difficile), this protein is RNA-binding protein Hfq.